Here is a 185-residue protein sequence, read N- to C-terminus: MKLLTDFLPIILFFVAYRIHGIYTATEVLIVAAILLMAWQWWRRGRVETMTWVSTLLILTFGGLTLYFHNDTFIKIKPSILYVLFAAALLFTHWREEPLLQRLMGGQLPAALPLSFWRRLNGYWIAFFLFGAVLNLIVAYAFSTGIWVDFKLFGMLAITVIFVLFQAVVISRALPQEAKDGDSSA.

A run of 5 helical transmembrane segments spans residues 19 to 39 (IHGIYTATEVLIVAAILLMAW), 49 to 69 (TMTWVSTLLILTFGGLTLYFH), 72 to 92 (TFIKIKPSILYVLFAAALLFT), 122 to 142 (GYWIAFFLFGAVLNLIVAYAF), and 150 to 170 (FKLFGMLAITVIFVLFQAVVI).

Belongs to the YciB family.

It localises to the cell inner membrane. Plays a role in cell envelope biogenesis, maintenance of cell envelope integrity and membrane homeostasis. This Acidithiobacillus ferrooxidans (strain ATCC 23270 / DSM 14882 / CIP 104768 / NCIMB 8455) (Ferrobacillus ferrooxidans (strain ATCC 23270)) protein is Inner membrane-spanning protein YciB.